Consider the following 84-residue polypeptide: MDNTNRLRRLHCHKQPKFTHSSQEVSSMKWEFINMTEQEEDLIFRMYRLVGDRWDLIARRVVGREAKEIERYWIMRNCDYFSHK.

The Myb-like domain maps to 36–73 (TEQEEDLIFRMYRLVGDRWDLIARRVVGREAKEIERYW).

Expressed in inflorescences and trichomes of rosette and cauline leaves.

It is found in the nucleus. Functionally, MYB-type transcription factor involved in trichome cell specification. Acts as a negative regulator of trichome patterning and formation by direct binding to the cis-acting regulatory elements of GL1, thus suppressing the expression of GL1. This Arabidopsis thaliana (Mouse-ear cress) protein is MYB-like transcription factor TCL1 (TCL1).